The sequence spans 595 residues: MNDLIKHKLELLPNNPGCYLHKDKFGNIIYVGKAKNLKNRVRSYFRGSHDTKTELLVSEIADFEFIVTESNIEALLLEINLIQENMPKFNIRLKDGKSYPFIKITKELYPRLLITRQVKKDGGLYFGPYPDAGAANEIKKLLDRIFPFKKCKNPANKVCFYYHIGQCKAHTICHTTEAYWQGLVEDVKNFLNGHDDKIVNQLKAKMKDMSDQMEFERAAEYRDLIEAVSTLRTKQRVIRQDMQDRDIFGYYVDKGWMCVQVFFVRQGKLIQRDVNMFPYYNDAEEDFLTYIGQFYLDSRHLKPKEIFIPGDIDQESVEALVGNEVKVFKPQRGEKKQLVNLAMKNARVSLTQKFDLLEKDIAKTQGAIENLGKLMGIPTPVRIESFDNSNIMGTSPVSAMVVFENGKPNKKEYRKYKIKTVEGPDDYASMREVIRRRYSRVKRDGLTPPDLIIMDGGQGQVNVAKDVLRNELNLSIPVAGLQKNDKHQTNELLFGDPLRVIDLPRQSEEFFLLHRIQDEVHRFAITFHRQVRSKNSFSSKLDGVEGLGPKRKQKLLKNFKSMTAIQQASVEDIQALGIPEKVAQALLDKLSQDSH.

Residues 14–91 enclose the GIY-YIG domain; sequence NNPGCYLHKD…IQENMPKFNI (78 aa). The UVR domain maps to 196 to 231; that stretch reads DKIVNQLKAKMKDMSDQMEFERAAEYRDLIEAVSTL.

Belongs to the UvrC family. As to quaternary structure, interacts with UvrB in an incision complex.

It localises to the cytoplasm. In terms of biological role, the UvrABC repair system catalyzes the recognition and processing of DNA lesions. UvrC both incises the 5' and 3' sides of the lesion. The N-terminal half is responsible for the 3' incision and the C-terminal half is responsible for the 5' incision. In Streptococcus thermophilus (strain ATCC BAA-250 / LMG 18311), this protein is UvrABC system protein C.